The primary structure comprises 333 residues: Thiamine-monophosphate kinase (333 aa).

Residues Asp44, Ser58, Thr59, and Asp60 each coordinate Mg(2+). Residue His67 participates in substrate binding. Positions 89 and 137 each coordinate Mg(2+). ATP-binding positions include 136 to 137 (GD) and Arg162. A Mg(2+)-binding site is contributed by Asp224. Ser226 is an ATP binding site. Residue Asp227 participates in Mg(2+) binding. Substrate contacts are provided by Glu278 and Trp320.

This sequence belongs to the thiamine-monophosphate kinase family.

It carries out the reaction thiamine phosphate + ATP = thiamine diphosphate + ADP. It functions in the pathway cofactor biosynthesis; thiamine diphosphate biosynthesis; thiamine diphosphate from thiamine phosphate: step 1/1. Catalyzes the ATP-dependent phosphorylation of thiamine-monophosphate (TMP) to form thiamine-pyrophosphate (TPP), the active form of vitamin B1. This Mycobacterium tuberculosis (strain CDC 1551 / Oshkosh) protein is Thiamine-monophosphate kinase.